Reading from the N-terminus, the 120-residue chain is Myohemerythrin (120 aa).

The Fe cation site is built by His-26, His-56, Glu-60, His-75, His-79, His-108, and Asp-113.

The protein belongs to the hemerythrin family.

Myohemerythrin is an oxygen-binding protein found in the retractor muscles of certain worms. The oxygen-binding site contains two iron atoms. The chain is Myohemerythrin from Sipunculus nudus (Sipunculan worm).